Here is a 394-residue protein sequence, read N- to C-terminus: S-adenosylmethionine synthase (394 aa).

ATP is bound at residue histidine 15. Aspartate 17 is a binding site for Mg(2+). Glutamate 43 is a binding site for K(+). L-methionine is bound by residues glutamate 56 and glutamine 99. The segment at 99–109 is flexible loop; that stretch reads QSPDIALGVNK. ATP is bound by residues 173-175, 239-240, aspartate 248, 254-255, alanine 271, and lysine 275; these read DGK, RF, and RK. Residue aspartate 248 coordinates L-methionine. Residue lysine 279 participates in L-methionine binding.

The protein belongs to the AdoMet synthase family. In terms of assembly, homotetramer; dimer of dimers. Mg(2+) serves as cofactor. It depends on K(+) as a cofactor.

The protein resides in the cytoplasm. The catalysed reaction is L-methionine + ATP + H2O = S-adenosyl-L-methionine + phosphate + diphosphate. It participates in amino-acid biosynthesis; S-adenosyl-L-methionine biosynthesis; S-adenosyl-L-methionine from L-methionine: step 1/1. Functionally, catalyzes the formation of S-adenosylmethionine (AdoMet) from methionine and ATP. The overall synthetic reaction is composed of two sequential steps, AdoMet formation and the subsequent tripolyphosphate hydrolysis which occurs prior to release of AdoMet from the enzyme. The chain is S-adenosylmethionine synthase from Kosmotoga olearia (strain ATCC BAA-1733 / DSM 21960 / TBF 19.5.1).